Here is a 628-residue protein sequence, read N- to C-terminus: MWLPVYVPLLLVFGVSLSLPHGSLGTDSSSLRGVDADTEKRINVGKTHLQTLRNLETRCHDSLQALVVIDAGSSSTRTNVFLAKTRSCPNKGRSIDPDSIQLIREGKRFTGLRVVLEEWLDTYAGKDWESRPVDARLLFQYVPQMHEGAKKLMQLLEEDTVAILDSQLNEEQKVQVKALGIPVMLCSTAGVRDFHEWYRDALFVLLRHLINNPSPAHGYKFFTNPFWTRPITGAEEGLFAFITLNHLSRRLGEDPARCMIDEYGVKHCRNDLAGVVEVGGASAQIVFPLQEGTVLPSSVRAVNLQRERLLPERYPSADVVSVSFMQLGMASSAGLFLKELCSNDEFLQGGICSNPCLFKGFQQSCSAGEVEVRPDGSASVNEDVRKNRLKPLATYCSVHNPEISFKVTNEMQCRENSIDPTKPLAERMKIENCSIIEGTGNFDKCVSQVESILVAPKLPLPANIEAASSGFESVDQVFRFASSTAPMFITGREMLASIDTLKDHRLLRSDFSGDVEELAEAAREFCSSEVIIRTDGPVIQLPNARGEQKLNSLNFDLCKTMALTVSLLRHMAAGENQPSFIKWEKSIAGPDGKPLADLGWQVGVILHHVLFTEEWGRTAYEAGYSHNL.

The first 25 residues, M1–G25, serve as a signal peptide directing secretion. Catalysis depends on E236, which acts as the Proton acceptor. An N-linked (GlcNAc...) asparagine glycan is attached at N432.

This sequence belongs to the GDA1/CD39 NTPase family. As to quaternary structure, homotetramer.

It localises to the secreted. Its subcellular location is the parasitophorous vacuole. It carries out the reaction a ribonucleoside 5'-triphosphate + H2O = a ribonucleoside 5'-diphosphate + phosphate + H(+). Its function is as follows. May perform an important processing step in the conversion of high energy nucleotides prior to uptake by the parasite. NTPAse-II has a specific activity 4.5-fold lower than NTPAse-I in hydrolysis of ATP. The primary difference between these isozymes lies in their ability to hydrolyze nucleoside triphosphate versus diphosphate substrates. While NTPAse-II hydrolyzes ATP to ADP and ADP to AMP at almost the same rate, NTPAse-I hydrolyzes ADP to AMP at a much slower rate (0.7% of the rate for ATP). In Toxoplasma gondii, this protein is Nucleoside-triphosphatase 2 (NTP1).